Consider the following 258-residue polypeptide: Capsid protein (258 aa).

The short motif at 3 to 20 is the Bipartite nuclear localization signal element; the sequence is KRPGDIIISTPGSKVRRR. Positions 41–55 match the Nuclear localization signal motif; it reads RKRAWVNRPMYRKPT. Residues 69–86 fold into a zinc finger; that stretch reads CEGPCKVQSFEQRDDVKH. The short motif at 102-123 is the Nuclear export signal element; sequence LTHRVGKRFCIKSIYILGKIWL. Residues 202–249 carry the Bipartite nuclear localization signal motif; it reads KRFYRLNHHVTYNHQEAGKYENHTENALLLYMACTHASNPVYATLKIR.

This sequence belongs to the geminiviridae capsid protein family. In terms of assembly, homomultimer. Binds to single-stranded and double-stranded viral DNA. Interacts (via nuclear localization signals) with host importin alpha-1a.

The protein localises to the virion. It is found in the host nucleus. Encapsidates the viral DNA into characteristic twinned ('geminate') particles. Binds the genomic viral ssDNA and shuttles it into and out of the cell nucleus. The CP of bipartite geminiviruses is not required for cell-to-cell or systemic movement. The protein is Capsid protein of African cassava mosaic virus (isolate West Kenyan 844) (ACMV).